A 445-amino-acid polypeptide reads, in one-letter code: UPF0210 protein SPP_0289 (445 aa).

This sequence belongs to the UPF0210 family. As to quaternary structure, homodimer.

The chain is UPF0210 protein SPP_0289 from Streptococcus pneumoniae (strain P1031).